Reading from the N-terminus, the 416-residue chain is Polyadenylation and cleavage factor homolog 1 (416 aa).

Positions 1–17 are enriched in polar residues; sequence MASNGSFSAQRNANART. Residues 1–80 form a disordered region; that stretch reads MASNGSFSAQ…NNNNVSRVSS (80 aa). Over residues 70–80 the composition is skewed to low complexity; that stretch reads SNNNNVSRVSS. The stretch at 199–220 forms a coiled coil; it reads KELTDLLSLLNNEKEKKTLEAS. A C2H2-type zinc finger spans residues 254 to 276; sequence RQCSSCGLRFKCQEEHSKHMDWH.

As to quaternary structure, forms a complex with cleavage and polyadenylation specificity factor (CPSF) subunits CLPS3, CLPS5, CPSF30, PCFS4, PCFS5, CSTF77 and FIPS3.

The protein localises to the nucleus. The chain is Polyadenylation and cleavage factor homolog 1 from Arabidopsis thaliana (Mouse-ear cress).